Here is a 95-residue protein sequence, read N- to C-terminus: UPF0235 protein A2cp1_1215 (95 aa).

This sequence belongs to the UPF0235 family.

This Anaeromyxobacter dehalogenans (strain 2CP-1 / ATCC BAA-258) protein is UPF0235 protein A2cp1_1215.